The primary structure comprises 388 residues: Sex-determination protein fem-3 (388 aa).

6 repeat units span residues 7–10 (SDDV), 110–113 (ITRF), 141–144 (ITRF), 234–237 (YHTT), 284–287 (YHTT), and 371–374 (SDDV).

Component of a complex containing fem-1, fem-2 and fem-3. Interacts with fem-1 and fem-2 (via N-terminus). Part of a E3 ubiquitin-protein ligase complex, at least composed of cul-2, elc-1, tra-1, fem-1, fem-2 and fem-3; mediates the ubiquitination and subsequent proteasomal degradation of tra-1. Interacts with tra-1. Interacts with sel-10. Interacts with tra-2.

Functionally, required for male development. In XO (male) animals, fem-3 directs male differentiation in all tissues. In XX (hermaphrodite) animals, it specifies the first 80 or so germ cells to be sperm. Negatively regulates male development when bound to tra-2. Together with fem-2 associates with the CBC(fem-1) E3 ubiquitin-protein ligase complex which mediates the ubiquitination and subsequent proteasomal degradation of tra-1. This chain is Sex-determination protein fem-3 (fem-3), found in Caenorhabditis elegans.